Reading from the N-terminus, the 472-residue chain is Ribulose bisphosphate carboxylase large chain (472 aa).

The substrate site is built by Asn-116 and Thr-166. Lys-168 (proton acceptor) is an active-site residue. Lys-170 provides a ligand contact to substrate. The Mg(2+) site is built by Lys-194, Asp-196, and Glu-197. Position 194 is an N6-carboxylysine (Lys-194). His-287 functions as the Proton acceptor in the catalytic mechanism. Substrate is bound by residues Arg-288, His-320, and Ser-372.

It belongs to the RuBisCO large chain family. Type I subfamily. In terms of assembly, heterohexadecamer of 8 large chains and 8 small chains. It depends on Mg(2+) as a cofactor.

The catalysed reaction is 2 (2R)-3-phosphoglycerate + 2 H(+) = D-ribulose 1,5-bisphosphate + CO2 + H2O. It catalyses the reaction D-ribulose 1,5-bisphosphate + O2 = 2-phosphoglycolate + (2R)-3-phosphoglycerate + 2 H(+). In terms of biological role, ruBisCO catalyzes two reactions: the carboxylation of D-ribulose 1,5-bisphosphate, the primary event in carbon dioxide fixation, as well as the oxidative fragmentation of the pentose substrate. Both reactions occur simultaneously and in competition at the same active site. The polypeptide is Ribulose bisphosphate carboxylase large chain (Nitrobacter vulgaris).